Here is a 491-residue protein sequence, read N- to C-terminus: G2/mitotic-specific cyclin-A (491 aa).

Positions 1–21 are disordered; it reads MASFQIHQDMSNKENPGIKIP. Residues 206-332 enclose the Cyclin N-terminal domain; that stretch reads DILEYFRESE…ILKILSFDLC (127 aa).

Belongs to the cyclin family. Cyclin AB subfamily. Component of the Frs-CycA-Cdk1 complex composed of CycA, Cdk1 and Z600. Interacts (via C-terminus) with Z600. Interacts with otu and (via C-terminus) with bam; the interaction stabilizes CycA by negatively regulating its ubiquitination. Ubiquitinated. Ubiquitination state is negatively regulated by a deubiquitinase complex made up of bam and otu.

Functionally, essential for the control of the cell cycle at the G2/M (mitosis) transition. Interacts with the Cdk1 and Cdk2 protein kinases to form MPF. G2/M cyclins accumulate steadily during G2 and are abruptly destroyed at mitosis. The polypeptide is G2/mitotic-specific cyclin-A (CycA) (Drosophila melanogaster (Fruit fly)).